We begin with the raw amino-acid sequence, 776 residues long: 5-methyltetrahydropteroyltriglutamate--homocysteine methyltransferase (776 aa).

Residues 16-19 (RELK) and Lys-112 each bind 5-methyltetrahydropteroyltri-L-glutamate. L-homocysteine-binding positions include 435 to 437 (IGS) and Glu-488. L-methionine-binding positions include 435–437 (IGS) and Glu-488. Residues 519-520 (RC) and Trp-565 contribute to the 5-methyltetrahydropteroyltri-L-glutamate site. Asp-603 lines the L-homocysteine pocket. Asp-603 provides a ligand contact to L-methionine. 5-methyltetrahydropteroyltri-L-glutamate is bound at residue Glu-609. Residues His-645, Cys-647, and Glu-669 each contribute to the Zn(2+) site. Catalysis depends on His-698, which acts as the Proton donor. Position 730 (Cys-730) interacts with Zn(2+).

It belongs to the vitamin-B12 independent methionine synthase family. It depends on Zn(2+) as a cofactor.

The enzyme catalyses 5-methyltetrahydropteroyltri-L-glutamate + L-homocysteine = tetrahydropteroyltri-L-glutamate + L-methionine. The protein operates within amino-acid biosynthesis; L-methionine biosynthesis via de novo pathway; L-methionine from L-homocysteine (MetE route): step 1/1. Its function is as follows. Catalyzes the transfer of a methyl group from 5-methyltetrahydrofolate to homocysteine resulting in methionine formation. The protein is 5-methyltetrahydropteroyltriglutamate--homocysteine methyltransferase of Ralstonia pickettii (strain 12J).